A 253-amino-acid polypeptide reads, in one-letter code: tRNA (guanine-N(1)-)-methyltransferase (253 aa).

S-adenosyl-L-methionine is bound by residues glycine 113 and 133-138; that span reads IGDYVL.

This sequence belongs to the RNA methyltransferase TrmD family. As to quaternary structure, homodimer.

Its subcellular location is the cytoplasm. It carries out the reaction guanosine(37) in tRNA + S-adenosyl-L-methionine = N(1)-methylguanosine(37) in tRNA + S-adenosyl-L-homocysteine + H(+). Its function is as follows. Specifically methylates guanosine-37 in various tRNAs. This chain is tRNA (guanine-N(1)-)-methyltransferase, found in Chloroflexus aurantiacus (strain ATCC 29366 / DSM 635 / J-10-fl).